We begin with the raw amino-acid sequence, 468 residues long: ATP synthase subunit beta 2 (468 aa).

155–162 (GGAGVGKT) lines the ATP pocket.

The protein belongs to the ATPase alpha/beta chains family. F-type ATPases have 2 components, CF(1) - the catalytic core - and CF(0) - the membrane proton channel. CF(1) has five subunits: alpha(3), beta(3), gamma(1), delta(1), epsilon(1). CF(0) has four main subunits: a(1), b(1), b'(1) and c(9-12).

It localises to the cell inner membrane. The enzyme catalyses ATP + H2O + 4 H(+)(in) = ADP + phosphate + 5 H(+)(out). Functionally, produces ATP from ADP in the presence of a proton gradient across the membrane. The catalytic sites are hosted primarily by the beta subunits. This is ATP synthase subunit beta 2 from Chlorobium luteolum (strain DSM 273 / BCRC 81028 / 2530) (Pelodictyon luteolum).